Reading from the N-terminus, the 816-residue chain is Nitrogen permease regulator 3 (816 aa).

The signal sequence occupies residues 1–23; that stretch reads MSSIARPPDPCLVAVVLIARSRA. Disordered regions lie at residues 26–166, 213–249, 262–287, and 632–684; these read RFVF…VPWE, WRKQ…GNDA, ALHP…PLDA, and SKGK…NRFR. Residues 44-56 show a composition bias toward basic residues; it reads PKARRTSRSRSRQ. The segment covering 82-95 has biased composition (low complexity); the sequence is SQNLNNSNNSNNNS. A compositionally biased stretch (polar residues) spans 101 to 127; the sequence is RRSSNFGLDDSNTLSENQRPGSISSSR. Positions 148-159 are enriched in basic and acidic residues; it reads DRQEDGSRESDG. The segment covering 214 to 224 has biased composition (basic residues); the sequence is RKQRRKKKKKQ. A compositionally biased stretch (basic and acidic residues) spans 225–238; that stretch reads RAEWESGELGHNDA. Polar residues predominate over residues 268–282; sequence QRPSVPNSRSSQMSS. Basic and acidic residues predominate over residues 641-654; it reads SDKEDSVNDERTEG. Positions 660–676 are enriched in low complexity; that stretch reads ASSSSSSSLASHGSGDA.

This sequence belongs to the NPR3 family.

Mediates inactivation of the TORC1 complex in response to amino acid starvation. Required for meiotic nuclear division. The polypeptide is Nitrogen permease regulator 3 (npr3) (Emericella nidulans (strain FGSC A4 / ATCC 38163 / CBS 112.46 / NRRL 194 / M139) (Aspergillus nidulans)).